The chain runs to 280 residues: 2-dehydro-3-deoxyphosphooctonate aldolase (280 aa).

Belongs to the KdsA family.

The protein localises to the cytoplasm. It carries out the reaction D-arabinose 5-phosphate + phosphoenolpyruvate + H2O = 3-deoxy-alpha-D-manno-2-octulosonate-8-phosphate + phosphate. Its pathway is carbohydrate biosynthesis; 3-deoxy-D-manno-octulosonate biosynthesis; 3-deoxy-D-manno-octulosonate from D-ribulose 5-phosphate: step 2/3. The protein operates within bacterial outer membrane biogenesis; lipopolysaccharide biosynthesis. This is 2-dehydro-3-deoxyphosphooctonate aldolase from Nitrosococcus oceani (strain ATCC 19707 / BCRC 17464 / JCM 30415 / NCIMB 11848 / C-107).